The sequence spans 150 residues: Infection structure-specific protein 24 (150 aa).

In terms of biological role, involved in the development of infection structures. The germ tube elongates across the leaf surface of the infected plant until it recognizes a stomate. Physical stimuli provided by the stomate induce differentiation of the germ tube to form a series of infection structures involved in host colonization. In Uromyces appendiculatus (Rust fungus), this protein is Infection structure-specific protein 24 (INF24).